A 527-amino-acid polypeptide reads, in one-letter code: GMP synthase [glutamine-hydrolyzing] (527 aa).

The region spanning 19 to 212 is the Glutamine amidotransferase type-1 domain; sequence KIIVLDYGSQ…AFSICGAKGD (194 aa). Cys-96 functions as the Nucleophile in the catalytic mechanism. Catalysis depends on residues His-186 and Glu-188. Residues 213-402 enclose the GMPS ATP-PPase domain; sequence WSMANFVDMQ…LGMPDEVVWR (190 aa). ATP is bound at residue 240–246; it reads SGGVDSS.

As to quaternary structure, homodimer.

The catalysed reaction is XMP + L-glutamine + ATP + H2O = GMP + L-glutamate + AMP + diphosphate + 2 H(+). The protein operates within purine metabolism; GMP biosynthesis; GMP from XMP (L-Gln route): step 1/1. Catalyzes the synthesis of GMP from XMP. This Streptococcus thermophilus (strain ATCC BAA-250 / LMG 18311) protein is GMP synthase [glutamine-hydrolyzing].